Here is a 380-residue protein sequence, read N- to C-terminus: Glycogenin-2 (380 aa).

UDP is bound by residues leucine 10, tyrosine 16, and arginine 95. Leucine 10, tyrosine 16, arginine 95, lysine 104, aspartate 120, alanine 121, aspartate 122, asparagine 158, threonine 159, aspartate 185, aspartate 188, and glutamine 189 together coordinate UDP-alpha-D-glucose. UDP is bound by residues aspartate 120, alanine 121, and aspartate 122. Aspartate 120 provides a ligand contact to Mn(2+). Aspartate 122 contacts Mn(2+). O-linked (Glc...) tyrosine glycans are attached at residues tyrosine 230 and tyrosine 232. The UDP site is built by histidine 249, glycine 252, and lysine 255. Position 249 (histidine 249) interacts with Mn(2+). UDP-alpha-D-glucose is bound by residues glycine 252 and lysine 255. Residues serine 331–glutamine 355 are disordered. Basic and acidic residues predominate over residues threonine 341–threonine 351. Tyrosine 367 carries an O-linked (Glc...) tyrosine glycan.

This sequence belongs to the glycosyltransferase 8 family. Glycogenin subfamily. Interacts with glycogen synthase GSY2. Mn(2+) is required as a cofactor.

The protein localises to the cytoplasm. It is found in the vacuole. It carries out the reaction L-tyrosyl-[glycogenin] + UDP-alpha-D-glucose = alpha-D-glucosyl-L-tyrosyl-[glycogenin] + UDP + H(+). The enzyme catalyses [1,4-alpha-D-glucosyl](n)-L-tyrosyl-[glycogenin] + UDP-alpha-D-glucose = [1,4-alpha-D-glucosyl](n+1)-L-tyrosyl-[glycogenin] + UDP + H(+). Self-glucosylating initiator of glycogen synthesis. It catalyzes the formation of a short alpha (1,4)-glucosyl chain covalently attached via a glucose 1-O-tyrosyl linkage to internal tyrosine residues and these chains act as primers for the elongation reaction catalyzed by glycogen synthase. Capable of transferring glucosyl residues to unbound acceptors such as free oligoglucans or oligoglucan derivatives. The protein is Glycogenin-2 of Saccharomyces cerevisiae (strain ATCC 204508 / S288c) (Baker's yeast).